Here is a 122-residue protein sequence, read N- to C-terminus: Large ribosomal subunit protein uL14 (122 aa).

The protein belongs to the universal ribosomal protein uL14 family. In terms of assembly, part of the 50S ribosomal subunit. Forms a cluster with proteins L3 and L19. In the 70S ribosome, L14 and L19 interact and together make contacts with the 16S rRNA in bridges B5 and B8.

Its function is as follows. Binds to 23S rRNA. Forms part of two intersubunit bridges in the 70S ribosome. In Methylibium petroleiphilum (strain ATCC BAA-1232 / LMG 22953 / PM1), this protein is Large ribosomal subunit protein uL14.